The following is a 126-amino-acid chain: Glycine cleavage system H protein (126 aa).

The Lipoyl-binding domain maps to 22 to 104 (IAYVGITDYA…YGKGWLIKIK (83 aa)). Lys63 carries the N6-lipoyllysine modification.

This sequence belongs to the GcvH family. As to quaternary structure, the glycine cleavage system is composed of four proteins: P, T, L and H. (R)-lipoate serves as cofactor.

In terms of biological role, the glycine cleavage system catalyzes the degradation of glycine. The H protein shuttles the methylamine group of glycine from the P protein to the T protein. This Phocaeicola vulgatus (strain ATCC 8482 / DSM 1447 / JCM 5826 / CCUG 4940 / NBRC 14291 / NCTC 11154) (Bacteroides vulgatus) protein is Glycine cleavage system H protein.